The primary structure comprises 258 residues: MMSKDKNRTNDVLIEAGLLSLVLTGTTLATYRGYTRYLRQIRNARGIPSKVFRKRWLYGKVTAVGDGDNFHFFHMPGGLFGGWGWLRSTPQLEKIDIVKKSRNSKRLLDFFRSSNKYVDLPVQYKNKRRLPTISVRICGVDAPERSHFGNPAQPYSEEALIWLQHEILGKKLWIKPLNIDQYGRCVASIRYWTRFGYKDLSLQMLKEGLALVYEGKSNAEFGGREKIYRRHEFIAKSKRIGMWSQKKLETPGDYKRKL.

A helical transmembrane segment spans residues 12–34 (VLIEAGLLSLVLTGTTLATYRGY). The TNase-like domain occupies 55-245 (RWLYGKVTAV…KSKRIGMWSQ (191 aa)). The active site involves R136. A Ca(2+)-binding site is contributed by D141. Residues E144 and R184 contribute to the active site.

The protein belongs to the LCL3 family.

The protein localises to the mitochondrion. Its subcellular location is the membrane. The chain is Probable endonuclease LCL3 (LCL3) from Nakaseomyces delphensis (Yeast).